Reading from the N-terminus, the 296-residue chain is GTPase Era (296 aa).

The region spanning 3-170 is the Era-type G domain; sequence KSGFVTIVGR…KELMFKYIPE (168 aa). The segment at 11–18 is G1; that stretch reads GRPNVGKS. Residue 11–18 participates in GTP binding; the sequence is GRPNVGKS. The interval 37–41 is G2; the sequence is QTTRN. Positions 58–61 are G3; that stretch reads DTPG. Residues 58 to 62 and 120 to 123 contribute to the GTP site; these read DTPGI and NKID. Residues 120–123 are G4; it reads NKID. The segment at 149–151 is G5; the sequence is ISA. The region spanning 201–278 is the KH type-2 domain; that stretch reads LSEEVPHGIA…YIRLWVKVKE (78 aa).

Belongs to the TRAFAC class TrmE-Era-EngA-EngB-Septin-like GTPase superfamily. Era GTPase family. Monomer.

It is found in the cytoplasm. Its subcellular location is the cell membrane. Functionally, an essential GTPase that binds both GDP and GTP, with rapid nucleotide exchange. Plays a role in 16S rRNA processing and 30S ribosomal subunit biogenesis and possibly also in cell cycle regulation and energy metabolism. The protein is GTPase Era of Clostridium botulinum (strain Okra / Type B1).